Consider the following 757-residue polypeptide: Polyribonucleotide nucleotidyltransferase (757 aa).

Residues Asp525 and Asp531 each coordinate Mg(2+). One can recognise a KH domain in the interval 591 to 650 (PRVISVNIPVDKIGELIGPKGKTINAIQDETGADISIEEDGAVYIGAVDGPSAEAARAQV). Positions 662 to 734 (GESFLGTVVK…DRGKLSLAPV (73 aa)) constitute an S1 motif domain. The disordered stretch occupies residues 736-757 (EEAADQEGSAAASDGPEAPAEG).

The protein belongs to the polyribonucleotide nucleotidyltransferase family. Requires Mg(2+) as cofactor.

It localises to the cytoplasm. The catalysed reaction is RNA(n+1) + phosphate = RNA(n) + a ribonucleoside 5'-diphosphate. In terms of biological role, involved in mRNA degradation. Catalyzes the phosphorolysis of single-stranded polyribonucleotides processively in the 3'- to 5'-direction. This chain is Polyribonucleotide nucleotidyltransferase, found in Clavibacter sepedonicus (Clavibacter michiganensis subsp. sepedonicus).